Reading from the N-terminus, the 262-residue chain is Hydroxyethylthiazole kinase (262 aa).

M39 contributes to the substrate binding site. The ATP site is built by K115 and T160. G187 contributes to the substrate binding site.

Belongs to the Thz kinase family. Mg(2+) serves as cofactor.

It carries out the reaction 5-(2-hydroxyethyl)-4-methylthiazole + ATP = 4-methyl-5-(2-phosphooxyethyl)-thiazole + ADP + H(+). Its pathway is cofactor biosynthesis; thiamine diphosphate biosynthesis; 4-methyl-5-(2-phosphoethyl)-thiazole from 5-(2-hydroxyethyl)-4-methylthiazole: step 1/1. Functionally, catalyzes the phosphorylation of the hydroxyl group of 4-methyl-5-beta-hydroxyethylthiazole (THZ). This chain is Hydroxyethylthiazole kinase, found in Staphylococcus epidermidis (strain ATCC 12228 / FDA PCI 1200).